Consider the following 322-residue polypeptide: tRNA U34 carboxymethyltransferase (322 aa).

Residues Lys91, Trp105, Lys110, Gly129, 179–180, Met195, Tyr199, and Arg314 each bind carboxy-S-adenosyl-L-methionine; that span reads LE.

It belongs to the class I-like SAM-binding methyltransferase superfamily. CmoB family. As to quaternary structure, homotetramer.

The catalysed reaction is carboxy-S-adenosyl-L-methionine + 5-hydroxyuridine(34) in tRNA = 5-carboxymethoxyuridine(34) in tRNA + S-adenosyl-L-homocysteine + H(+). In terms of biological role, catalyzes carboxymethyl transfer from carboxy-S-adenosyl-L-methionine (Cx-SAM) to 5-hydroxyuridine (ho5U) to form 5-carboxymethoxyuridine (cmo5U) at position 34 in tRNAs. The sequence is that of tRNA U34 carboxymethyltransferase from Pseudomonas paraeruginosa (strain DSM 24068 / PA7) (Pseudomonas aeruginosa (strain PA7)).